We begin with the raw amino-acid sequence, 174 residues long: Ribosomal RNA large subunit methyltransferase H (174 aa).

Residues Leu90, Gly122, and 141–146 (LGELTW) each bind S-adenosyl-L-methionine.

It belongs to the RNA methyltransferase RlmH family. Homodimer.

Its subcellular location is the cytoplasm. The catalysed reaction is pseudouridine(1915) in 23S rRNA + S-adenosyl-L-methionine = N(3)-methylpseudouridine(1915) in 23S rRNA + S-adenosyl-L-homocysteine + H(+). Specifically methylates the pseudouridine at position 1915 (m3Psi1915) in 23S rRNA. This chain is Ribosomal RNA large subunit methyltransferase H, found in Brucella melitensis biotype 2 (strain ATCC 23457).